The sequence spans 276 residues: Microtubule-associated protein RP/EB family member 1A (276 aa).

The Calponin-homology (CH) domain maps to 13–115 (FVGRNEILTW…FLQWLKRFCD (103 aa)). Positions 124–172 (ENYNPVERRSRNGKERSVKGSNKIPKSLQTNNNHPPPNSSSVGLSKASG) are disordered. Basic and acidic residues predominate over residues 129–141 (VERRSRNGKERSV). Residues 162–172 (SSSVGLSKASG) show a composition bias toward low complexity. The 71-residue stretch at 173–243 (PKSAKAAEVQ…LYATDANESA (71 aa)) folds into the EB1 C-terminal domain. Positions 252-276 (NQSLGVEDDEAEGNGEQLEEEKTQA) are disordered. A compositionally biased stretch (acidic residues) spans 257–270 (VEDDEAEGNGEQLE).

It belongs to the MAPRE family. In terms of assembly, homodimer and heterodimer with EB1B. Interacts with tobamovirus movement protein. As to expression, highly expressed in guard cells of leaf stomata, pollen grains and pollen tubes. Expressed in young roots.

Its subcellular location is the cytoplasm. It localises to the cytoskeleton. It is found in the spindle pole. The protein localises to the phragmoplast. Functionally, binds to the plus end of microtubules and regulates the dynamics of the microtubule cytoskeleton. May be involved in anchoring microtubules to their nucleation sites and/or functioning as a reservoir for distribution to the growing end. In plants, microtubule minus ends are not necessarily severed from the nucleation site and transported to the plus end of a microtubule as part of the recycling process. May play a role in endomembrane organization during polarized growth of plant cells. Interacts with the tobamovirus movement protein (MP) and may play a role in the association of MP with the microtubule system during infection. This Arabidopsis thaliana (Mouse-ear cress) protein is Microtubule-associated protein RP/EB family member 1A (EB1A).